The following is a 96-amino-acid chain: MEALGMIETRGLVALIEASDAMVKAARVKLVGVKQIGGGLCTAMVRGDVAACKAATDAGAAAAQRIGELVSVHVIPRPHGDLEEVFPISFKGDSNI.

The BMC domain occupies 3 to 87; sequence ALGMIETRGL…PHGDLEEVFP (85 aa).

Belongs to the bacterial microcompartments protein family. Homohexamer with a central pore of up to 8.6 Angstroms diameter. The hexamers pack into a two-dimensional array. Interacts with EutQ; a probably cytoplasm-facing helix (Val-49 to Gln-64) interacts with N-terminus of EutQ.

The protein localises to the bacterial microcompartment. The protein operates within amine and polyamine degradation; ethanolamine degradation. In terms of biological role, probably a major component of the bacterial microcompartment (BMC) shell dedicated to ethanolamine degradation. Each homohexamer has a central pore with an opening of up to 8.6 Angstroms. A positively-charged funnel leads to the pore from each side of the hexamer. The pore probably allows metabolite passage into and out of the BMC. Expression of eutK, eutL, eutM, eutN, eutS (eutSMNLK) in E.coli leads to formation of a single BMC. Expression alone leads to thick filaments that interfere with cell separation. Coexpression of eutQ with eutSMNLK permits E.coli to make cells with more than one mobile BMC, as is usual in vivo. May play a role in BMC shell biogenesis. Can replace homolog pduA in the pdu operon, cells grow better than wild-type on 1,2-propanediol and vitamin B12. Protein is incorporated into the pdu BMC microcompartment. Its function is as follows. The ethanolamine (EA) catabolic bacterial microcompartment (BMC) probably concentrates low levels of ethanolamine catabolic enzymes, concentrates volatile reaction intermediates, keeps the level of toxic acetaldehyde low, generates enough acetyl-CoA to support cell growth, and maintains a pool of free coenzyme A (CoA) and NAD. Deletion of BMC genes (eutK, eutL, eutM) restores growth of eutD deletions, suggesting there are dedicated pools of coenzyme A (CoA) and NAD in the BMC. Expression of the eut operon allows this bacteria to use ethanolamine as a carbon, nitrogen and energy source. It relies on cobalamin (vitamin B12) both as a cofactor for the ethanolamine ammonia-lyase (EAL) activity and to induce the operon. EA enhances bacterial survival in macrophages in a concentration-dependent manner, suggesting it is an important nutrient during infection. The chain is Bacterial microcompartment shell protein EutM from Salmonella typhimurium (strain LT2 / SGSC1412 / ATCC 700720).